Reading from the N-terminus, the 87-residue chain is U9-ctenitoxin-Pn1a (87 aa).

Positions 1–22 (MWLKTQLFVLAIAVIALLEVHA) are cleaved as a signal peptide. Residues 23–37 (EPESNDNNELVVEEA) constitute a propeptide that is removed on maturation. Intrachain disulfides connect Cys-40/Cys-54, Cys-47/Cys-64, Cys-53/Cys-73, and Cys-66/Cys-71. Residues 75–87 (KSLREMAAAAFGR) constitute a propeptide that is removed on maturation.

Belongs to the neurotoxin 02 (plectoxin) family. 01 (Tx3) subfamily. Expressed by the venom gland.

It is found in the secreted. Antagonist of L-type calcium channels (Cav1/CACNA1). The sequence is that of U9-ctenitoxin-Pn1a from Phoneutria nigriventer (Brazilian armed spider).